Consider the following 341-residue polypeptide: L-threonine 3-dehydrogenase (341 aa).

C38 lines the Zn(2+) pocket. Active-site charge relay system residues include T40 and H43. Zn(2+)-binding residues include H63, E64, C93, C96, C99, and C107. Residues I175, D195, R200, 262-264, and 286-287 each bind NAD(+); these read LGI and IY.

The protein belongs to the zinc-containing alcohol dehydrogenase family. Homotetramer. Zn(2+) serves as cofactor.

The protein localises to the cytoplasm. It catalyses the reaction L-threonine + NAD(+) = (2S)-2-amino-3-oxobutanoate + NADH + H(+). It participates in amino-acid degradation; L-threonine degradation via oxydo-reductase pathway; glycine from L-threonine: step 1/2. Its function is as follows. Catalyzes the NAD(+)-dependent oxidation of L-threonine to 2-amino-3-ketobutyrate. This is L-threonine 3-dehydrogenase from Colwellia psychrerythraea (strain 34H / ATCC BAA-681) (Vibrio psychroerythus).